Here is a 220-residue protein sequence, read N- to C-terminus: MTKGILGKKVGMTQVFTDNGELVPVTVIDVTPNVVMQVKTLENDGYSAVQLGFDDKREVLSNKPEQGHAAKANTTPKRFIGEIRDAELGDDIKVGDKVAADIFAEGETVDVTGTTKGHGYQGNIHKDGQRRGPMAHGSRYHRRPGSLGAIINHVFKGKKLPGRMGNNTRTVQHLRIVKVDTENNVLLIKGNVPGANKSFVTIKNSVKANTKKSLSKQSNK.

The interval 113–143 (GTTKGHGYQGNIHKDGQRRGPMAHGSRYHRR) is disordered.

The protein belongs to the universal ribosomal protein uL3 family. As to quaternary structure, part of the 50S ribosomal subunit. Forms a cluster with proteins L14 and L19.

Functionally, one of the primary rRNA binding proteins, it binds directly near the 3'-end of the 23S rRNA, where it nucleates assembly of the 50S subunit. The chain is Large ribosomal subunit protein uL3 from Limosilactobacillus fermentum (strain NBRC 3956 / LMG 18251) (Lactobacillus fermentum).